The chain runs to 117 residues: Large ribosomal subunit protein uL18 (117 aa).

The protein belongs to the universal ribosomal protein uL18 family. In terms of assembly, part of the 50S ribosomal subunit; part of the 5S rRNA/L5/L18/L25 subcomplex. Contacts the 5S and 23S rRNAs.

Functionally, this is one of the proteins that bind and probably mediate the attachment of the 5S RNA into the large ribosomal subunit, where it forms part of the central protuberance. This chain is Large ribosomal subunit protein uL18, found in Chromobacterium violaceum (strain ATCC 12472 / DSM 30191 / JCM 1249 / CCUG 213 / NBRC 12614 / NCIMB 9131 / NCTC 9757 / MK).